We begin with the raw amino-acid sequence, 417 residues long: Exodeoxyribonuclease 7 large subunit (417 aa).

The protein belongs to the XseA family. Heterooligomer composed of large and small subunits.

It is found in the cytoplasm. It carries out the reaction Exonucleolytic cleavage in either 5'- to 3'- or 3'- to 5'-direction to yield nucleoside 5'-phosphates.. Functionally, bidirectionally degrades single-stranded DNA into large acid-insoluble oligonucleotides, which are then degraded further into small acid-soluble oligonucleotides. This chain is Exodeoxyribonuclease 7 large subunit, found in Lactococcus lactis subsp. lactis (strain IL1403) (Streptococcus lactis).